The chain runs to 445 residues: 3-phosphoshikimate 1-carboxyvinyltransferase (445 aa).

Positions 21, 22, and 26 each coordinate 3-phosphoshikimate. Lys21 serves as a coordination point for phosphoenolpyruvate. Residues Gly92 and Arg120 each contribute to the phosphoenolpyruvate site. The 3-phosphoshikimate site is built by Ser165, Gln166, Asp307, and Lys334. Gln166 serves as a coordination point for phosphoenolpyruvate. Asp307 functions as the Proton acceptor in the catalytic mechanism. Arg338, Arg379, and Lys405 together coordinate phosphoenolpyruvate.

This sequence belongs to the EPSP synthase family. As to quaternary structure, monomer.

Its subcellular location is the cytoplasm. The catalysed reaction is 3-phosphoshikimate + phosphoenolpyruvate = 5-O-(1-carboxyvinyl)-3-phosphoshikimate + phosphate. The protein operates within metabolic intermediate biosynthesis; chorismate biosynthesis; chorismate from D-erythrose 4-phosphate and phosphoenolpyruvate: step 6/7. Functionally, catalyzes the transfer of the enolpyruvyl moiety of phosphoenolpyruvate (PEP) to the 5-hydroxyl of shikimate-3-phosphate (S3P) to produce enolpyruvyl shikimate-3-phosphate and inorganic phosphate. This is 3-phosphoshikimate 1-carboxyvinyltransferase from Chlamydia felis (strain Fe/C-56) (Chlamydophila felis).